The sequence spans 253 residues: Imidazole glycerol phosphate synthase subunit HisF (253 aa).

Residues Asp11 and Asp130 contribute to the active site.

The protein belongs to the HisA/HisF family. In terms of assembly, heterodimer of HisH and HisF.

The protein localises to the cytoplasm. The enzyme catalyses 5-[(5-phospho-1-deoxy-D-ribulos-1-ylimino)methylamino]-1-(5-phospho-beta-D-ribosyl)imidazole-4-carboxamide + L-glutamine = D-erythro-1-(imidazol-4-yl)glycerol 3-phosphate + 5-amino-1-(5-phospho-beta-D-ribosyl)imidazole-4-carboxamide + L-glutamate + H(+). It functions in the pathway amino-acid biosynthesis; L-histidine biosynthesis; L-histidine from 5-phospho-alpha-D-ribose 1-diphosphate: step 5/9. Functionally, IGPS catalyzes the conversion of PRFAR and glutamine to IGP, AICAR and glutamate. The HisF subunit catalyzes the cyclization activity that produces IGP and AICAR from PRFAR using the ammonia provided by the HisH subunit. The polypeptide is Imidazole glycerol phosphate synthase subunit HisF (Dinoroseobacter shibae (strain DSM 16493 / NCIMB 14021 / DFL 12)).